Consider the following 324-residue polypeptide: NADH-ubiquinone oxidoreductase chain 1 (324 aa).

A run of 8 helical transmembrane segments spans residues 9-29 (LINP…LTLV), 75-95 (ILFL…WAPM), 106-126 (LGIL…LGSG), 146-166 (ISYE…SGGY), 178-198 (TWLL…TLAE), 212-232 (ELVS…FFLA), 259-279 (ELMT…FLWM), and 299-319 (FLPI…ALAG).

This sequence belongs to the complex I subunit 1 family. Core subunit of respiratory chain NADH dehydrogenase (Complex I) which is composed of 45 different subunits.

It localises to the mitochondrion inner membrane. It catalyses the reaction a ubiquinone + NADH + 5 H(+)(in) = a ubiquinol + NAD(+) + 4 H(+)(out). In terms of biological role, core subunit of the mitochondrial membrane respiratory chain NADH dehydrogenase (Complex I) which catalyzes electron transfer from NADH through the respiratory chain, using ubiquinone as an electron acceptor. Essential for the catalytic activity and assembly of complex I. The chain is NADH-ubiquinone oxidoreductase chain 1 (mt-nd1) from Danio rerio (Zebrafish).